The sequence spans 138 residues: Large ribosomal subunit protein bL19 (138 aa).

The protein belongs to the bacterial ribosomal protein bL19 family.

Its function is as follows. This protein is located at the 30S-50S ribosomal subunit interface and may play a role in the structure and function of the aminoacyl-tRNA binding site. The polypeptide is Large ribosomal subunit protein bL19 (Rickettsia canadensis (strain McKiel)).